We begin with the raw amino-acid sequence, 82 residues long: MTPEPPAPDTASRDAENLDAAAAQQRLRKLHSKATRLKLDLHDLAEDLPIGWEGLLDVARRTYDAYAEIALLEGLAEKETSR.

It belongs to the UPF0437 family.

The polypeptide is UPF0437 protein in nifX-nifW intergenic region (Frankia alni).